The primary structure comprises 132 residues: MEVLRYRSRPIVGGEAEGPAVVIDSLSFYGEVDPETGVTSGGKPLAGRVAAIRRSRGSTVGSYVIYALKENGVAPLAILMERAEPIVIAGCVLAGIPLYDGLPPEFFERVRDGYRVRVHSDGLVEVLGPGQP.

Serine 58 serves as the catalytic Proton acceptor.

The protein belongs to the AcnX type II small subunit family. As to quaternary structure, heterodimer composed of a large subunit (PMDh-L) and a small subunit (PMDh-S).

The catalysed reaction is (R)-5-phosphomevalonate = (2E)-3-methyl-5-phosphooxypent-2-enoate + H2O. Its pathway is isoprenoid biosynthesis; isopentenyl diphosphate biosynthesis via mevalonate pathway. With respect to regulation, neither the addition of 1 mM Mg(2+) nor 1 mM Mn(2+) has a significant effect on the activity, whereas Zn(2+) causes almost complete inactivation. Strongly inhibited by H(2)O(2), but not by EDTA or iodoacetamide. Component of a hydro-lyase that catalyzes the dehydration of mevalonate 5-phosphate (MVA5P) to form trans-anhydromevalonate 5-phosphate (tAHMP). Involved in the archaeal mevalonate (MVA) pathway, which provides fundamental precursors for isoprenoid biosynthesis, such as isopentenyl diphosphate (IPP) and dimethylallyl diphosphate (DMAPP). The chain is Phosphomevalonate dehydratase small subunit from Aeropyrum pernix (strain ATCC 700893 / DSM 11879 / JCM 9820 / NBRC 100138 / K1).